Here is a 310-residue protein sequence, read N- to C-terminus: tRNA uridine(34) hydroxylase (310 aa).

The 95-residue stretch at 124–218 (SDPEVLLIDT…YFEEVPQEES (95 aa)) folds into the Rhodanese domain. The active-site Cysteine persulfide intermediate is the cysteine 178.

Belongs to the TrhO family.

It catalyses the reaction uridine(34) in tRNA + AH2 + O2 = 5-hydroxyuridine(34) in tRNA + A + H2O. Catalyzes oxygen-dependent 5-hydroxyuridine (ho5U) modification at position 34 in tRNAs. The sequence is that of tRNA uridine(34) hydroxylase from Pseudomonas putida (strain ATCC 47054 / DSM 6125 / CFBP 8728 / NCIMB 11950 / KT2440).